A 405-amino-acid chain; its full sequence is Arginine biosynthesis bifunctional protein ArgJ (405 aa).

Thr-152, Lys-178, Thr-189, Glu-276, Asn-400, and Thr-405 together coordinate substrate. Thr-189 functions as the Nucleophile in the catalytic mechanism.

This sequence belongs to the ArgJ family. Heterotetramer of two alpha and two beta chains.

It is found in the cytoplasm. The enzyme catalyses N(2)-acetyl-L-ornithine + L-glutamate = N-acetyl-L-glutamate + L-ornithine. The catalysed reaction is L-glutamate + acetyl-CoA = N-acetyl-L-glutamate + CoA + H(+). It functions in the pathway amino-acid biosynthesis; L-arginine biosynthesis; L-ornithine and N-acetyl-L-glutamate from L-glutamate and N(2)-acetyl-L-ornithine (cyclic): step 1/1. It participates in amino-acid biosynthesis; L-arginine biosynthesis; N(2)-acetyl-L-ornithine from L-glutamate: step 1/4. Its function is as follows. Catalyzes two activities which are involved in the cyclic version of arginine biosynthesis: the synthesis of N-acetylglutamate from glutamate and acetyl-CoA as the acetyl donor, and of ornithine by transacetylation between N(2)-acetylornithine and glutamate. The chain is Arginine biosynthesis bifunctional protein ArgJ from Pseudomonas syringae pv. syringae (strain B728a).